Here is an 83-residue protein sequence, read N- to C-terminus: Small ribosomal subunit protein bS20 (83 aa).

Positions 60 to 83 are disordered; that stretch reads ASKGLIHKNKASRDKSRLAAKLAN.

The protein belongs to the bacterial ribosomal protein bS20 family.

Binds directly to 16S ribosomal RNA. The sequence is that of Small ribosomal subunit protein bS20 from Streptococcus thermophilus (strain CNRZ 1066).